The following is a 109-amino-acid chain: Putative double-stranded DNA mimic protein YciU (109 aa).

This sequence belongs to the putative dsDNA mimic protein family.

May act as a double-stranded DNA (dsDNA) mimic. Probably regulates the activity of a dsDNA-binding protein. This Shigella flexneri protein is Putative double-stranded DNA mimic protein YciU.